Here is a 155-residue protein sequence, read N- to C-terminus: Ribosomal RNA large subunit methyltransferase H (155 aa).

Residues Leu-73, Gly-104, and 123 to 128 contribute to the S-adenosyl-L-methionine site; that span reads LSPLTL.

Belongs to the RNA methyltransferase RlmH family. In terms of assembly, homodimer.

The protein localises to the cytoplasm. It carries out the reaction pseudouridine(1915) in 23S rRNA + S-adenosyl-L-methionine = N(3)-methylpseudouridine(1915) in 23S rRNA + S-adenosyl-L-homocysteine + H(+). Its function is as follows. Specifically methylates the pseudouridine at position 1915 (m3Psi1915) in 23S rRNA. This chain is Ribosomal RNA large subunit methyltransferase H, found in Azotobacter vinelandii (strain DJ / ATCC BAA-1303).